The following is a 208-amino-acid chain: Golgi apparatus membrane protein TVP23 homolog B (208 aa).

N-acetylmethionine is present on methionine 1. The span at 1 to 21 shows a compositional bias: acidic residues; it reads MLQQDSNDDTEDVSLFDAEEE. Positions 1–27 are disordered; that stretch reads MLQQDSNDDTEDVSLFDAEEETTNRPK. 4 consecutive transmembrane segments (helical) span residues 34 to 53, 54 to 72, 126 to 146, and 152 to 172; these read PVAS…VYLL, CELF…ILLL, IFWL…FSAL, and KWLA…YGYI.

Belongs to the TVP23 family.

It localises to the membrane. This chain is Golgi apparatus membrane protein TVP23 homolog B (TVP23B), found in Bos taurus (Bovine).